We begin with the raw amino-acid sequence, 431 residues long: Glutamate-1-semialdehyde 2,1-aminomutase (431 aa).

An N6-(pyridoxal phosphate)lysine modification is found at lysine 269.

The protein belongs to the class-III pyridoxal-phosphate-dependent aminotransferase family. HemL subfamily. As to quaternary structure, homodimer. The cofactor is pyridoxal 5'-phosphate.

It localises to the cytoplasm. The enzyme catalyses (S)-4-amino-5-oxopentanoate = 5-aminolevulinate. Its pathway is porphyrin-containing compound metabolism; protoporphyrin-IX biosynthesis; 5-aminolevulinate from L-glutamyl-tRNA(Glu): step 2/2. It participates in porphyrin-containing compound metabolism; chlorophyll biosynthesis. In Chlorobium phaeobacteroides (strain DSM 266 / SMG 266 / 2430), this protein is Glutamate-1-semialdehyde 2,1-aminomutase.